Here is a 1035-residue protein sequence, read N- to C-terminus: Eukaryotic translation initiation factor 3 subunit A (1035 aa).

The stretch at L92–A121 forms a coiled coil. Positions M339–F523 constitute a PCI domain. Residues E606–E910 adopt a coiled-coil conformation. Basic and acidic residues-rich tracts occupy residues T619 to R632 and K809 to L901. Disordered stretches follow at residues T619–A649 and K809–Q1035. 2 stretches are compositionally biased toward low complexity: residues K943 to A953 and P988 to P1004.

It belongs to the eIF-3 subunit A family. As to quaternary structure, component of the eukaryotic translation initiation factor 3 (eIF-3) complex.

The protein localises to the cytoplasm. In terms of biological role, RNA-binding component of the eukaryotic translation initiation factor 3 (eIF-3) complex, which is involved in protein synthesis of a specialized repertoire of mRNAs and, together with other initiation factors, stimulates binding of mRNA and methionyl-tRNAi to the 40S ribosome. The eIF-3 complex specifically targets and initiates translation of a subset of mRNAs involved in cell proliferation. In Emericella nidulans (strain FGSC A4 / ATCC 38163 / CBS 112.46 / NRRL 194 / M139) (Aspergillus nidulans), this protein is Eukaryotic translation initiation factor 3 subunit A (tif32).